We begin with the raw amino-acid sequence, 417 residues long: Serine hydroxymethyltransferase 1 (417 aa).

(6S)-5,6,7,8-tetrahydrofolate is bound by residues Leu-121 and 125 to 127; that span reads GHL. At Lys-230 the chain carries N6-(pyridoxal phosphate)lysine. 355 to 357 is a (6S)-5,6,7,8-tetrahydrofolate binding site; it reads SPF.

It belongs to the SHMT family. In terms of assembly, homodimer. Pyridoxal 5'-phosphate is required as a cofactor.

The protein resides in the cytoplasm. The enzyme catalyses (6R)-5,10-methylene-5,6,7,8-tetrahydrofolate + glycine + H2O = (6S)-5,6,7,8-tetrahydrofolate + L-serine. Its pathway is one-carbon metabolism; tetrahydrofolate interconversion. The protein operates within amino-acid biosynthesis; glycine biosynthesis; glycine from L-serine: step 1/1. Its function is as follows. Catalyzes the reversible interconversion of serine and glycine with tetrahydrofolate (THF) serving as the one-carbon carrier. This reaction serves as the major source of one-carbon groups required for the biosynthesis of purines, thymidylate, methionine, and other important biomolecules. Also exhibits THF-independent aldolase activity toward beta-hydroxyamino acids, producing glycine and aldehydes, via a retro-aldol mechanism. This chain is Serine hydroxymethyltransferase 1, found in Pseudomonas syringae pv. tomato (strain ATCC BAA-871 / DC3000).